The primary structure comprises 89 residues: Small ribosomal subunit protein uS15 (89 aa).

This sequence belongs to the universal ribosomal protein uS15 family. As to quaternary structure, part of the 30S ribosomal subunit. Forms a bridge to the 50S subunit in the 70S ribosome, contacting the 23S rRNA.

One of the primary rRNA binding proteins, it binds directly to 16S rRNA where it helps nucleate assembly of the platform of the 30S subunit by binding and bridging several RNA helices of the 16S rRNA. In terms of biological role, forms an intersubunit bridge (bridge B4) with the 23S rRNA of the 50S subunit in the ribosome. The polypeptide is Small ribosomal subunit protein uS15 (Aliivibrio salmonicida (strain LFI1238) (Vibrio salmonicida (strain LFI1238))).